The primary structure comprises 146 residues: Hemoglobin subunit beta (146 aa).

The 145-residue stretch at 2–146 (HWSAEEKQLI…VAHALARKYH (145 aa)) folds into the Globin domain. Heme b contacts are provided by His63 and His92.

This sequence belongs to the globin family. Heterotetramer of two alpha chains and two beta chains. Red blood cells.

In terms of biological role, involved in oxygen transport from the lung to the various peripheral tissues. This chain is Hemoglobin subunit beta (HBB), found in Anser anser anser (Western greylag goose).